The sequence spans 208 residues: Transmembrane protein 222 (208 aa).

The tract at residues 1 to 26 (MAEAEGSSLLLLPPPPPPPRMAEVEA) is disordered. Residues 1 to 55 (MAEAEGSSLLLLPPPPPPPRMAEVEAPTAAETDMKQYQGSGGVAMDVERSRFPYC) are Extracellular-facing. A helical membrane pass occupies residues 56 to 76 (VVWTPIPVLTWFFPIIGHMGI). Residues 77–164 (CTSTGVIRDF…MRYNNSTNWN (88 aa)) lie on the Cytoplasmic side of the membrane. A helical transmembrane segment spans residues 165 to 185 (MVTLCFFCLLYGKYVSVGAFV). Lys186 is a topological domain (extracellular). Residues 187–207 (TWLPFILLLGIILTVSLVFNL) form a helical membrane-spanning segment. Position 208 (Arg208) is a topological domain, cytoplasmic.

In terms of tissue distribution, widely expressed. The highest expression is observed in the brain.

It is found in the membrane. The protein localises to the cell projection. The protein resides in the dendrite. This Homo sapiens (Human) protein is Transmembrane protein 222 (TMEM222).